The chain runs to 438 residues: ATP-dependent RNA helicase SUB2 (438 aa).

Acidic residues predominate over residues 1-19 (MSHEGEEDLLEYSDNEQEI). The tract at residues 1–44 (MSHEGEEDLLEYSDNEQEIQVDNTKATEVAGNGEEAADGKDGDK) is disordered. A Q motif motif is present at residues 54–82 (TGFKDFLLKPELSRAIIDCGFEHPSEVQQ). The Helicase ATP-binding domain occupies 85 to 260 (IPQSIHGTDV…RRFLQNPLEI (176 aa)). 98 to 105 (AKSGLGKT) is an ATP binding site. A DECD box motif is present at residues 207–210 (DECD). Residues 272–433 (GLQQYYIRLE…EFPEEGVDPS (162 aa)) enclose the Helicase C-terminal domain.

The protein belongs to the DEAD box helicase family. DECD subfamily.

It is found in the nucleus. The catalysed reaction is ATP + H2O = ADP + phosphate + H(+). Its function is as follows. ATP-binding RNA helicase involved in transcription elongation and required for the export of mRNA out of the nucleus. SUB2 also plays a role in pre-mRNA splicing and spliceosome assembly. May be involved in rDNA and telomeric silencing, and maintenance of genome integrity. This Eremothecium gossypii (strain ATCC 10895 / CBS 109.51 / FGSC 9923 / NRRL Y-1056) (Yeast) protein is ATP-dependent RNA helicase SUB2 (SUB2).